Reading from the N-terminus, the 351-residue chain is Fruit bromelain (351 aa).

The N-terminal stretch at 1–24 is a signal peptide; the sequence is MASKVQLVFLFLFLCAMWASPSAA. The propeptide at 25-121 is activation peptide; the sequence is SRDEPNDPMM…VVSFDDVNIS (97 aa). N119 carries an N-linked (GlcNAc...) asparagine glycan. 3 disulfides stabilise this stretch: C144-C184, C178-C217, and C273-C325. C147 is a catalytic residue. Active-site residues include H279 and N300.

Belongs to the peptidase C1 family.

The catalysed reaction is Hydrolysis of proteins with broad specificity for peptide bonds. Bz-Phe-Val-Arg-|-NHMec is a good synthetic substrate, but there is no action on Z-Arg-Arg-|-NHMec (cf. stem bromelain).. Cysteine proteinase with a high level of diversity in substrate specificity. This Ananas comosus (Pineapple) protein is Fruit bromelain.